Reading from the N-terminus, the 465-residue chain is Argininosuccinate lyase (465 aa).

Belongs to the lyase 1 family. Argininosuccinate lyase subfamily.

It localises to the cytoplasm. It catalyses the reaction 2-(N(omega)-L-arginino)succinate = fumarate + L-arginine. The protein operates within amino-acid biosynthesis; L-arginine biosynthesis; L-arginine from L-ornithine and carbamoyl phosphate: step 3/3. In Rhodopseudomonas palustris (strain ATCC BAA-98 / CGA009), this protein is Argininosuccinate lyase.